The following is a 191-amino-acid chain: Rho-related GTP-binding protein RhoG (191 aa).

10–17 is a binding site for GTP; sequence GDGAVGKT. The short motif at 32 to 40 is the Effector region element; that stretch reads YIPTVFDNY. GTP is bound by residues 57 to 61 and 115 to 118; these read DTAGQ and TKKD. Phosphothreonine occurs at positions 138 and 180. Cys188 carries the post-translational modification Cysteine methyl ester. Cys188 carries S-geranylgeranyl cysteine lipidation. Positions 189–191 are cleaved as a propeptide — removed in mature form; that stretch reads ILL.

The protein belongs to the small GTPase superfamily. Rho family. As to quaternary structure, interacts with ARHGEF26. Interacts with ARHGEF16. Interacts with UNC13D; the interaction increases RhoG affinity to the membrane lipids, targets UNC13D to membrane lipids and facilitates cytotoxic granule (CG) docking to the plasma membrane.

It is found in the cell membrane. Plays a role in immunological synaptic F-actin density and architecture organization. Regulates actin reorganization in lymphocytes, possibly through the modulation of Rac1 activity. Required for the formation of membrane ruffles during macropinocytosis. Plays a role in cell migration and is required for the formation of cup-like structures during trans-endothelial migration of leukocytes. Binds phospholipids in an activation-dependent manner; thereby acting as an anchor for other proteins to the plasma membrane (PM). Plays a role in exocytosis of cytotoxic granules (CG) by lymphocytes/Component of the exocytosis machinery in natural killer (NK) and CD8+ T cells. Promotes the docking of cytotoxic granules (CG) to the plasma membrane through the interaction with UNC13D. Involved in the cytotoxic activity of lymphocytes/primary CD8+ T cells. The protein is Rho-related GTP-binding protein RhoG (RHOG) of Cricetus cricetus (Black-bellied hamster).